We begin with the raw amino-acid sequence, 308 residues long: Pseudouridine-5'-phosphate glycosidase (308 aa).

The Proton donor role is filled by Glu25. Lys86 and Val106 together coordinate substrate. Residue Asp142 coordinates Mn(2+). 144-146 lines the substrate pocket; sequence SAD. The Nucleophile role is filled by Lys163.

The protein belongs to the pseudouridine-5'-phosphate glycosidase family. As to quaternary structure, homotrimer. The cofactor is Mn(2+).

The enzyme catalyses D-ribose 5-phosphate + uracil = psi-UMP + H2O. In terms of biological role, catalyzes the reversible cleavage of pseudouridine 5'-phosphate (PsiMP) to ribose 5-phosphate and uracil. Functions biologically in the cleavage direction, as part of a pseudouridine degradation pathway. This is Pseudouridine-5'-phosphate glycosidase from Symbiobacterium thermophilum (strain DSM 24528 / JCM 14929 / IAM 14863 / T).